The following is a 463-amino-acid chain: NEDD8-activating enzyme E1 catalytic subunit (463 aa).

Ala2 is subject to N-acetylalanine. Positions 53–70 (HPDFEPSTESLQFLLDTC) are interaction with UBE2M N-terminus. ATP-binding positions include 100 to 124 (DMDTIDVSNLNRQFLFRPKDIGRPK) and 148 to 171 (IQDFNDTFYRQFHIIVCGLDSIIA). Interaction with UBE2M N-terminus stretches follow at residues 157–161 (RQFHI) and 192–217 (PSSIVPLIDGGTEGFKGNARVILPGM). The interval 227–229 (LYP) is interaction with NEDD8. The Glycyl thioester intermediate role is filled by Cys237. Interaction with NAE1 stretches follow at residues 242–248 (MPRLPEH) and 292–295 (YNIR). The segment at 331–338 (IATSAYIP) is interaction with UBE2M N-terminus. The tract at residues 352–357 (YTYTFE) is interaction with NEDD8. Residues 368-463 (SQLPQNIQFS…TVLFKLHFTS (96 aa)) are interaction with UBE2M core domain.

It belongs to the ubiquitin-activating E1 family. UBA3 subfamily. Heterodimer of UBA3 and NAE1. Interacts with NEDD8, UBE2F and UBE2M. Binds ESR1 and ESR2 with bound steroid ligand. Interacts with TBATA. As to expression, ubiquitously expressed.

The enzyme catalyses ATP + [NEDD8 protein] + [E1 NEDD8-activating enzyme]-L-cysteine = AMP + diphosphate + [E1 NEDD8-activating enzyme]-S-[NEDD8 protein]-yl-L-cysteine.. The protein operates within protein modification; protein neddylation. With respect to regulation, binding of TP53BP2 to the regulatory subunit NAE1 decreases activity. Catalytic subunit of the dimeric UBA3-NAE1 E1 enzyme. E1 activates NEDD8 by first adenylating its C-terminal glycine residue with ATP, thereafter linking this residue to the side chain of the catalytic cysteine, yielding a NEDD8-UBA3 thioester and free AMP. E1 finally transfers NEDD8 to the catalytic cysteine of UBE2M. Down-regulates steroid receptor activity. Necessary for cell cycle progression. In Homo sapiens (Human), this protein is NEDD8-activating enzyme E1 catalytic subunit (UBA3).